The primary structure comprises 264 residues: Glutamate racemase (264 aa).

Substrate-binding positions include aspartate 9–serine 10 and tyrosine 41–glycine 42. Cysteine 72 acts as the Proton donor/acceptor in catalysis. Asparagine 73–threonine 74 is a substrate binding site. Cysteine 183 (proton donor/acceptor) is an active-site residue. Substrate is bound at residue threonine 184 to histidine 185.

The protein belongs to the aspartate/glutamate racemases family.

It carries out the reaction L-glutamate = D-glutamate. It functions in the pathway cell wall biogenesis; peptidoglycan biosynthesis. In terms of biological role, provides the (R)-glutamate required for cell wall biosynthesis. This Geobacillus kaustophilus (strain HTA426) protein is Glutamate racemase.